We begin with the raw amino-acid sequence, 314 residues long: Probable cell division protein WhiA (314 aa).

The segment at residues 275 to 309 (SLKELGELVTSGAISKSGVNHRLKKIDEFAEKIKR) is a DNA-binding region (H-T-H motif).

It belongs to the WhiA family.

Its function is as follows. Involved in cell division and chromosome segregation. The chain is Probable cell division protein WhiA from Oceanobacillus iheyensis (strain DSM 14371 / CIP 107618 / JCM 11309 / KCTC 3954 / HTE831).